A 439-amino-acid polypeptide reads, in one-letter code: Ribosomal protein uS12 methylthiotransferase RimO (439 aa).

Positions 7–119 constitute an MTTase N-terminal domain; that stretch reads KQLCLISLGC…IDILIAKKQN (113 aa). Positions 16, 50, 82, 151, 155, and 158 each coordinate [4Fe-4S] cluster. The 232-residue stretch at 137–368 folds into the Radical SAM core domain; it reads TGSSVHAYVK…ALKHQNHSFK (232 aa).

It belongs to the methylthiotransferase family. RimO subfamily. [4Fe-4S] cluster serves as cofactor.

The protein localises to the cytoplasm. The enzyme catalyses L-aspartate(89)-[ribosomal protein uS12]-hydrogen + (sulfur carrier)-SH + AH2 + 2 S-adenosyl-L-methionine = 3-methylsulfanyl-L-aspartate(89)-[ribosomal protein uS12]-hydrogen + (sulfur carrier)-H + 5'-deoxyadenosine + L-methionine + A + S-adenosyl-L-homocysteine + 2 H(+). Functionally, catalyzes the methylthiolation of an aspartic acid residue of ribosomal protein uS12. The polypeptide is Ribosomal protein uS12 methylthiotransferase RimO (Helicobacter pylori (strain HPAG1)).